We begin with the raw amino-acid sequence, 434 residues long: MFLDTAKIKVKAGNGGDGMVAFRREKYVPNGGPWGGDGGRGGNVVFVVDEGLRTLMDFRYNRHFKADSGEKGMTKGMHGRGAEDLRVRVPQGTTVRDAETGKVLTDLIEHGQEFIVAHGGRGGRGNIRFATPKNPAPEISENGEPGQERELQLELKILADVGLVGFPSVGKSTLLSVITSAKPKIGAYHFTTIVPNLGMVRTQSGESFAVADLPGLIEGASQGVGLGTQFLRHIERTRVILHIIDMSASEGRDPYEDYLAINKELESYNLRLMERPQIIVANKMDMPESQENLEEFKKKLSENYDEFEELPAIFPISGLTKQGLATLLDATAELLDKTPEFLLYDESDMEEEAYYGFDEEEKAFEISRDDDATWVLSGEKLMKLFNMTNFDRDESVMKFARQLRGMGVDEALRARGAKDGDLVRIGKFEFEFVD.

Residues 1–158 (MFLDTAKIKV…RELQLELKIL (158 aa)) form the Obg domain. The 178-residue stretch at 159 to 336 (ADVGLVGFPS…LLDATAELLD (178 aa)) folds into the OBG-type G domain. GTP is bound by residues 165–172 (GFPSVGKS), 190–194 (FTTIV), 212–215 (DLPG), 282–285 (NKMD), and 317–319 (SGL). 2 residues coordinate Mg(2+): Ser172 and Thr192. Positions 356–434 (GFDEEEKAFE…IGKFEFEFVD (79 aa)) constitute an OCT domain.

The protein belongs to the TRAFAC class OBG-HflX-like GTPase superfamily. OBG GTPase family. In terms of assembly, monomer. Mg(2+) is required as a cofactor.

The protein localises to the cytoplasm. In terms of biological role, an essential GTPase which binds GTP, GDP and possibly (p)ppGpp with moderate affinity, with high nucleotide exchange rates and a fairly low GTP hydrolysis rate. Plays a role in control of the cell cycle, stress response, ribosome biogenesis and in those bacteria that undergo differentiation, in morphogenesis control. The polypeptide is GTPase Obg (Streptococcus pneumoniae (strain ATCC 700669 / Spain 23F-1)).